The sequence spans 345 residues: MIERKQWTIKQAQELFDKPFFELLFQAQQVHRIYFDPQQVQVSTLLSIKTGACPEDCKYCPQSSRYKTGLEKERLMEVEQVIDSARKAKNAGSTRFCMGAAWKNPHERDMPYLEKMVKEVKALGMETCMTLGMLNGLQAQRLADAGLDYYNHNLDTSPEFYGNIITTRTYQDRLDTLDKVREAGIKVCSGGIVGLGEAIRDRAALLVQLANLPKPPESVPINMLVKVKGTPLAENEDVDPFDFIRTIAVARIMMPSSHVRLSAGREQMNEQTQAMCFMAGANSIFYGCKLLTTPNPAEDKDLQLFRKLGINLQQTQTAFGDNQQQQHLAEAIINADNEQFYNAAL.

The 219-residue stretch at 38–256 (QQVQVSTLLS…IAVARIMMPS (219 aa)) folds into the Radical SAM core domain. The [4Fe-4S] cluster site is built by Cys53, Cys57, and Cys60. [2Fe-2S] cluster is bound by residues Cys97, Cys128, Cys188, and Arg260.

This sequence belongs to the radical SAM superfamily. Biotin synthase family. In terms of assembly, homodimer. [4Fe-4S] cluster is required as a cofactor. The cofactor is [2Fe-2S] cluster.

The catalysed reaction is (4R,5S)-dethiobiotin + (sulfur carrier)-SH + 2 reduced [2Fe-2S]-[ferredoxin] + 2 S-adenosyl-L-methionine = (sulfur carrier)-H + biotin + 2 5'-deoxyadenosine + 2 L-methionine + 2 oxidized [2Fe-2S]-[ferredoxin]. It participates in cofactor biosynthesis; biotin biosynthesis; biotin from 7,8-diaminononanoate: step 2/2. Functionally, catalyzes the conversion of dethiobiotin (DTB) to biotin by the insertion of a sulfur atom into dethiobiotin via a radical-based mechanism. In Photorhabdus laumondii subsp. laumondii (strain DSM 15139 / CIP 105565 / TT01) (Photorhabdus luminescens subsp. laumondii), this protein is Biotin synthase.